We begin with the raw amino-acid sequence, 235 residues long: UPF0502 protein Bmul_3231/BMULJ_05293 (235 aa).

This sequence belongs to the UPF0502 family.

The sequence is that of UPF0502 protein Bmul_3231/BMULJ_05293 from Burkholderia multivorans (strain ATCC 17616 / 249).